A 576-amino-acid polypeptide reads, in one-letter code: Enolase 4 (576 aa).

Residues 187 to 232 form a disordered region; sequence ELRNEAMSEAPPQATPTSAPAKDKKGNDKGKKGNITENPLPPAEPP. Residues 196–206 are compositionally biased toward low complexity; the sequence is APPQATPTSAP. Residues 207–217 are compositionally biased toward basic and acidic residues; it reads AKDKKGNDKGK. Glu302 and Lys524 together coordinate substrate.

Belongs to the enolase family.

The catalysed reaction is (2R)-2-phosphoglycerate = phosphoenolpyruvate + H2O. Its pathway is carbohydrate degradation; glycolysis; pyruvate from D-glyceraldehyde 3-phosphate: step 4/5. The sequence is that of Enolase 4 (eno4) from Danio rerio (Zebrafish).